A 172-amino-acid chain; its full sequence is MASNFKKANMASSSQRKRMSPKPELTEEQKQEIREAFDLFDADGTGTIDVKELKVAMRALGFEPKKEEIKKMISEIDKEGTGKMNFGDFLTVMTQKMSEKDTKEEILKAFKLFDDDETGKISFKNLKRVAKELGENLTDEELQEMIDEADRDGDGEVSEQEFLRIMKKTSLY.

Residues 1-30 (MASNFKKANMASSSQRKRMSPKPELTEEQK) form a disordered region. Residue A2 is modified to N-acetylalanine. The required for self-assembly stretch occupies residues 2-25 (ASNFKKANMASSSQRKRMSPKPEL). Residue S20 is modified to Phosphoserine. A Glycyl lysine isopeptide (Lys-Gly) (interchain with G-Cter in SUMO2) cross-link involves residue K22. T26 bears the Phosphothreonine mark. EF-hand domains follow at residues 28–63 (EQKQ…LGFE), 64–99 (PKKE…KMSE), 101–136 (DTKE…LGEN), and 137–172 (LTDE…TSLY). D41, D43, T45, T47, and E52 together coordinate Ca(2+). 5 residues coordinate Ca(2+): D150, D152, D154, E156, and E161.

It belongs to the centrin family. As to quaternary structure, monomer. Homooligomer. Interacts with SFI1. Interacts with CCP110. Component of the XPC complex composed of XPC, RAD23B and CETN2. Component of the nuclear pore complex (NPC)-associated TREX-2 complex (transcription and export complex 2), composed of at least GANP, 2 copies of ENY2, PCID2, SEM1/DSS1, and either centrin CETN2 or centrin CETN3. The TREX-2 complex also associates with ALYREF/ALY and with the nucleoporin NUP153. Interacts with USP49. Forms a microtubule-associated complex with POC5, POC1B and FAM161A. Interacts with CCDC15.

It is found in the cytoplasm. It localises to the cytoskeleton. The protein localises to the microtubule organizing center. Its subcellular location is the centrosome. The protein resides in the centriole. It is found in the nucleus envelope. It localises to the nucleus. The protein localises to the nuclear pore complex. Its function is as follows. Plays a fundamental role in microtubule organizing center structure and function. Required for centriole duplication and correct spindle formation. Has a role in regulating cytokinesis and genome stability via cooperation with CALM1 and CCP110. In terms of biological role, involved in global genome nucleotide excision repair (GG-NER) by acting as component of the XPC complex. Cooperatively with RAD23B appears to stabilize XPC. In vitro, stimulates DNA binding of the XPC:RAD23B dimer. The XPC complex is proposed to represent the first factor bound at the sites of DNA damage and together with other core recognition factors, XPA, RPA and the TFIIH complex, is part of the pre-incision (or initial recognition) complex. The XPC complex recognizes a wide spectrum of damaged DNA characterized by distortions of the DNA helix such as single-stranded loops, mismatched bubbles or single-stranded overhangs. The orientation of XPC complex binding appears to be crucial for inducing a productive NER. XPC complex is proposed to recognize and to interact with unpaired bases on the undamaged DNA strand which is followed by recruitment of the TFIIH complex and subsequent scanning for lesions in the opposite strand in a 5'-to-3' direction by the NER machinery. Cyclobutane pyrimidine dimers (CPDs) which are formed upon UV-induced DNA damage esacpe detection by the XPC complex due to a low degree of structural perurbation. Instead they are detected by the UV-DDB complex which in turn recruits and cooperates with the XPC complex in the respective DNA repair. Functionally, as a component of the TREX-2 complex, involved in the export of mRNAs to the cytoplasm through the nuclear pores. The sequence is that of Centrin-2 (CETN2) from Homo sapiens (Human).